The following is a 160-amino-acid chain: Putative pre-16S rRNA nuclease (160 aa).

This sequence belongs to the YqgF nuclease family.

The protein localises to the cytoplasm. Functionally, could be a nuclease involved in processing of the 5'-end of pre-16S rRNA. The polypeptide is Putative pre-16S rRNA nuclease (Rhodopseudomonas palustris (strain BisB5)).